Consider the following 268-residue polypeptide: Glutamate racemase (268 aa).

Substrate-binding positions include 9–10 (DS) and 41–42 (YG). Cysteine 73 acts as the Proton donor/acceptor in catalysis. A substrate-binding site is contributed by 74–75 (NS). Residue cysteine 183 is the Proton donor/acceptor of the active site. 184 to 185 (TH) contributes to the substrate binding site.

Belongs to the aspartate/glutamate racemases family.

The enzyme catalyses L-glutamate = D-glutamate. The protein operates within cell wall biogenesis; peptidoglycan biosynthesis. Provides the (R)-glutamate required for cell wall biosynthesis. The protein is Glutamate racemase of Shewanella pealeana (strain ATCC 700345 / ANG-SQ1).